Reading from the N-terminus, the 453-residue chain is Carbamoyl phosphate synthase arginine-specific small chain (453 aa).

A mitochondrion-targeting transit peptide spans 1–28; that stretch reads MFARVFKAMPARASALTSVNASIQARFM. The 188-residue stretch at 219-406 folds into the Glutamine amidotransferase type-1 domain; sequence HVAVIDCGVK…IDSVKKYKAS (188 aa). The active-site Nucleophile is C295. Catalysis depends on residues H379 and E381.

This sequence belongs to the CarA family. In terms of assembly, heterodimer composed of 2 chains; the small (or glutamine) chain promotes the hydrolysis of glutamine to ammonia, which is used by the large (or ammonia) chain to synthesize carbamoyl phosphate.

The protein resides in the mitochondrion matrix. The enzyme catalyses hydrogencarbonate + L-glutamine + 2 ATP + H2O = carbamoyl phosphate + L-glutamate + 2 ADP + phosphate + 2 H(+). It carries out the reaction L-glutamine + H2O = L-glutamate + NH4(+). Its pathway is amino-acid biosynthesis; L-arginine biosynthesis; carbamoyl phosphate from bicarbonate: step 1/1. Its function is as follows. Small subunit of the arginine-specific carbamoyl phosphate synthase (CPSase). CPSase catalyzes the formation of carbamoyl phosphate from the ammonia moiety of glutamine, carbonate, and phosphate donated by ATP, the first step of the arginine biosynthetic pathway. The small subunit (glutamine amidotransferase) binds and cleaves glutamine to supply the large subunit with the substrate ammonia. This chain is Carbamoyl phosphate synthase arginine-specific small chain (cpa1), found in Neosartorya fischeri (strain ATCC 1020 / DSM 3700 / CBS 544.65 / FGSC A1164 / JCM 1740 / NRRL 181 / WB 181) (Aspergillus fischerianus).